The primary structure comprises 161 residues: Mediator of RNA polymerase II transcription subunit 10 (161 aa).

It belongs to the Mediator complex subunit 10 family. As to quaternary structure, component of the Mediator complex.

The protein resides in the nucleus. In terms of biological role, component of the Mediator complex, a coactivator involved in the regulated transcription of nearly all RNA polymerase II-dependent genes. Mediator functions as a bridge to convey information from gene-specific regulatory proteins to the basal RNA polymerase II transcription machinery. Mediator is recruited to promoters by direct interactions with regulatory proteins and serves as a scaffold for the assembly of a functional preinitiation complex with RNA polymerase II and the general transcription factors. The protein is Mediator of RNA polymerase II transcription subunit 10 (NUT2) of Kluyveromyces lactis (strain ATCC 8585 / CBS 2359 / DSM 70799 / NBRC 1267 / NRRL Y-1140 / WM37) (Yeast).